Consider the following 382-residue polypeptide: ATP phosphoribosyltransferase regulatory subunit (382 aa).

The protein belongs to the class-II aminoacyl-tRNA synthetase family. HisZ subfamily. As to quaternary structure, heteromultimer composed of HisG and HisZ subunits.

Its subcellular location is the cytoplasm. The protein operates within amino-acid biosynthesis; L-histidine biosynthesis; L-histidine from 5-phospho-alpha-D-ribose 1-diphosphate: step 1/9. Its function is as follows. Required for the first step of histidine biosynthesis. May allow the feedback regulation of ATP phosphoribosyltransferase activity by histidine. The chain is ATP phosphoribosyltransferase regulatory subunit from Burkholderia ambifaria (strain MC40-6).